We begin with the raw amino-acid sequence, 244 residues long: Coenzyme Q-binding protein COQ10 homolog B, mitochondrial (244 aa).

Belongs to the COQ10 family. As to quaternary structure, interacts with coenzyme Q.

The protein resides in the mitochondrion inner membrane. Functionally, required for the function of coenzyme Q in the respiratory chain. May serve as a chaperone or may be involved in the transport of Q6 from its site of synthesis to the catalytic sites of the respiratory complexes. The polypeptide is Coenzyme Q-binding protein COQ10 homolog B, mitochondrial (coq10b) (Xenopus laevis (African clawed frog)).